The chain runs to 646 residues: Acetyl-coenzyme A synthetase (646 aa).

CoA contacts are provided by residues 190-193 (RAGK) and threonine 309. ATP-binding positions include 385–387 (GEP), 409–414 (DTWWQT), aspartate 498, and arginine 513. Serine 521 contacts CoA. Arginine 524 lines the ATP pocket. Mg(2+)-binding residues include valine 535, histidine 537, and valine 540. CoA is bound at residue arginine 582. Lysine 607 is modified (N6-acetyllysine).

This sequence belongs to the ATP-dependent AMP-binding enzyme family. Mg(2+) is required as a cofactor. Acetylated. Deacetylation by the SIR2-homolog deacetylase activates the enzyme.

It catalyses the reaction acetate + ATP + CoA = acetyl-CoA + AMP + diphosphate. Its function is as follows. Catalyzes the conversion of acetate into acetyl-CoA (AcCoA), an essential intermediate at the junction of anabolic and catabolic pathways. AcsA undergoes a two-step reaction. In the first half reaction, AcsA combines acetate with ATP to form acetyl-adenylate (AcAMP) intermediate. In the second half reaction, it can then transfer the acetyl group from AcAMP to the sulfhydryl group of CoA, forming the product AcCoA. The polypeptide is Acetyl-coenzyme A synthetase (Pseudoalteromonas atlantica (strain T6c / ATCC BAA-1087)).